The following is a 199-amino-acid chain: Elongation factor Ts (199 aa).

Residues threonine 82–valine 85 form an involved in Mg(2+) ion dislocation from EF-Tu region.

The protein belongs to the EF-Ts family.

The protein localises to the cytoplasm. In terms of biological role, associates with the EF-Tu.GDP complex and induces the exchange of GDP to GTP. It remains bound to the aminoacyl-tRNA.EF-Tu.GTP complex up to the GTP hydrolysis stage on the ribosome. This is Elongation factor Ts from Leptospira interrogans serogroup Icterohaemorrhagiae serovar Lai (strain 56601).